The sequence spans 419 residues: Metacaspase-1B (419 aa).

The interval 1–109 is disordered; the sequence is MYHPNYNYPP…PPMEAQQFGK (109 aa). The segment covering 33-50 has biased composition (pro residues); that stretch reads SPPPPQPYYSNGYPPPSQ. A compositionally biased stretch (low complexity) spans 51–66; sequence SPHSYSPPQYPPHGQY. The span at 82–93 shows a compositional bias: polar residues; it reads QYRSYHSHSPSW. Residues H210 and C266 contribute to the active site.

It belongs to the peptidase C14B family.

Its function is as follows. Involved in cell death (apoptosis). The polypeptide is Metacaspase-1B (casB) (Aspergillus oryzae (strain ATCC 42149 / RIB 40) (Yellow koji mold)).